The chain runs to 886 residues: MEKSSSSLIDPPSLSGDEIRDAFINFFVQHNHKKLASSSLIPDDPTVLLTIAGMLPFKPIFLGLKESSTPRATSSQKCIRTNDIENVGRTARHHTFFEMLGNFSFGDYFKKEAIQWAWELSTEVFRLNPQNIVISVFKEDLEAEQIWKEVVGVDANRIIRMGAADNFWSSGATGPCGPCSELYFDFKPELGSDEIDLEDDSRFIEFYNLVFMQYNRDLKGNLEPLANCHIDTGMGLERMAQILQKKSNNYETDLIFPLINAAALLAQIKYETTNKKNKTSLKIIGDHCRAVTHLICDGVSASNLGRGYILRRLIRRMIRHGRLVGIIQPFLPQLAEIAIELMKNAYPQLLEKKKIILNELKIEESRFLETLERGEKLLAEITSHECDLISGAQAFELYDTYGFPLELTEEIANEKGISVDINGFENEMAKQRKRAKEASVSIDLTEEGSIEREISLFDDTRFEGYEKLETTSTVIGIFKNNESVKQAVQGDLVKIIVNRTPFYAESGGQIGDKGLITSQDLEVSVENVRKKKNIFIHSGIVNTGVLEINSSVQMNVTPSFRQRTTSNHTATHLLQSALKLSIDSSVSQRGSLVSNHRLRFDFNAPKPLTIKELEDMEARINQWINEDHLIQIKTMPIKEAMAAGALAMFGEKYGDVVRVVDVPGISMELCGGTHVTRTSQLGTFKIINETGIASGIRRIEAIAGPSVLDYFNERDLVVKELSKSFKVQSYEIVERVSSLQLELKDKTKELIKVKNELALAKALGLATYAKSVGKSKLLIRRLDGVDGSGLQSAASSLIDHLGKYSAVIFGGIPNQEIDNKLVFVAAFSPDLVSDGLHAGKFISGVAKMCGGGGGGRPNLAQAGGSQPQSLDLALEKANENLTQQLS.

The Zn(2+) site is built by His-568, His-572, Cys-670, and His-674.

This sequence belongs to the class-II aminoacyl-tRNA synthetase family. It depends on Zn(2+) as a cofactor.

Its subcellular location is the cytoplasm. It catalyses the reaction tRNA(Ala) + L-alanine + ATP = L-alanyl-tRNA(Ala) + AMP + diphosphate. Catalyzes the attachment of alanine to tRNA(Ala) in a two-step reaction: alanine is first activated by ATP to form Ala-AMP and then transferred to the acceptor end of tRNA(Ala). Also edits incorrectly charged Ser-tRNA(Ala) and Gly-tRNA(Ala) via its editing domain. In Prochlorococcus marinus (strain NATL2A), this protein is Alanine--tRNA ligase.